Here is a 305-residue protein sequence, read N- to C-terminus: tRNA pseudouridine synthase B (305 aa).

The Nucleophile role is filled by D48.

It belongs to the pseudouridine synthase TruB family. Type 1 subfamily.

The catalysed reaction is uridine(55) in tRNA = pseudouridine(55) in tRNA. Responsible for synthesis of pseudouridine from uracil-55 in the psi GC loop of transfer RNAs. The protein is tRNA pseudouridine synthase B of Pseudomonas putida (strain ATCC 700007 / DSM 6899 / JCM 31910 / BCRC 17059 / LMG 24140 / F1).